The chain runs to 607 residues: Elongation factor 4 (607 aa).

One can recognise a tr-type G domain in the interval 11–193 (EKIRNFSIIA…QIVEKVPAPQ (183 aa)). Residues 23–28 (DHGKST) and 140–143 (NKID) each bind GTP.

This sequence belongs to the TRAFAC class translation factor GTPase superfamily. Classic translation factor GTPase family. LepA subfamily.

Its subcellular location is the cell membrane. It carries out the reaction GTP + H2O = GDP + phosphate + H(+). Its function is as follows. Required for accurate and efficient protein synthesis under certain stress conditions. May act as a fidelity factor of the translation reaction, by catalyzing a one-codon backward translocation of tRNAs on improperly translocated ribosomes. Back-translocation proceeds from a post-translocation (POST) complex to a pre-translocation (PRE) complex, thus giving elongation factor G a second chance to translocate the tRNAs correctly. Binds to ribosomes in a GTP-dependent manner. This chain is Elongation factor 4, found in Lactococcus lactis subsp. cremoris (strain MG1363).